The sequence spans 311 residues: Aspartate carbamoyltransferase catalytic subunit (311 aa).

Residues R59 and T60 each coordinate carbamoyl phosphate. An L-aspartate-binding site is contributed by K87. Carbamoyl phosphate-binding residues include R109, H139, and Q142. The L-aspartate site is built by R172 and R224. Positions 265 and 266 each coordinate carbamoyl phosphate.

The protein belongs to the aspartate/ornithine carbamoyltransferase superfamily. ATCase family. In terms of assembly, heterododecamer (2C3:3R2) of six catalytic PyrB chains organized as two trimers (C3), and six regulatory PyrI chains organized as three dimers (R2).

It carries out the reaction carbamoyl phosphate + L-aspartate = N-carbamoyl-L-aspartate + phosphate + H(+). Its pathway is pyrimidine metabolism; UMP biosynthesis via de novo pathway; (S)-dihydroorotate from bicarbonate: step 2/3. Catalyzes the condensation of carbamoyl phosphate and aspartate to form carbamoyl aspartate and inorganic phosphate, the committed step in the de novo pyrimidine nucleotide biosynthesis pathway. The protein is Aspartate carbamoyltransferase catalytic subunit of Streptococcus pyogenes serotype M12 (strain MGAS2096).